Consider the following 447-residue polypeptide: GTPase Der (447 aa).

2 EngA-type G domains span residues 3–167 and 181–354; these read PVIA…VQER and VKIA…AAAM. GTP-binding positions include 9–16, 56–60, 119–122, 187–194, 234–238, and 299–302; these read GRPNVGKS, DTGGF, NKAE, DTAGL, and NKWD. The KH-like domain occupies 355-439; it reads VKLPTPQLTR…PLRIEFRTNK (85 aa).

This sequence belongs to the TRAFAC class TrmE-Era-EngA-EngB-Septin-like GTPase superfamily. EngA (Der) GTPase family. In terms of assembly, associates with the 50S ribosomal subunit.

GTPase that plays an essential role in the late steps of ribosome biogenesis. In Cupriavidus pinatubonensis (strain JMP 134 / LMG 1197) (Cupriavidus necator (strain JMP 134)), this protein is GTPase Der.